Reading from the N-terminus, the 70-residue chain is Movement protein TGBp3 (70 aa).

Topologically, residues 1–4 are lumenal; it reads MFPR. Residues 5-25 form a helical membrane-spanning segment; sequence SGLGLAVAAAVVAYLVLLLAQ. The Cytoplasmic portion of the chain corresponds to 26–70; sequence QLYMSNSSQCTIVITGESVSVVGCVYSEAFIELVKGLKPYYHPLG.

This sequence belongs to the Tymovirales TGBp3 protein family.

Its subcellular location is the host endoplasmic reticulum membrane. Its function is as follows. Plays a role in viral cell-to-cell propagation, by facilitating genome transport to neighboring plant cells through plasmosdesmata. May induce the formation of granular vesicles derived from the Endoplasmic reticulum, which align on actin filaments. The protein is Movement protein TGBp3 of Crataegus (hawthorn).